A 131-amino-acid chain; its full sequence is Agouti-signaling protein (131 aa).

An N-terminal signal peptide occupies residues 1 to 20 (MNIFRLLLATLLVSLCFLTA). The N-linked (GlcNAc...) asparagine glycan is linked to asparagine 38. Residues 57–104 (KSKKISRKEAEKKRSSKKKASMKNVARPRPPPPNPCVATRNSCKSPAP) form a disordered region. Intrachain disulfides connect cysteine 92-cysteine 107, cysteine 99-cysteine 113, cysteine 106-cysteine 124, cysteine 110-cysteine 131, and cysteine 115-cysteine 122. The Agouti domain occupies 92-131 (CVATRNSCKSPAPACCDPCASCQCRFFRSACTCRVLSPSC).

The protein resides in the secreted. Functionally, involved in the regulation of melanogenesis. The binding of ASP to MC1R precludes alpha-MSH initiated signaling and thus blocks production of cAMP, leading to a down-regulation of eumelanogenesis (brown/black pigment) and thus increasing synthesis of pheomelanin (yellow/red pigment). The sequence is that of Agouti-signaling protein (ASIP) from Vulpes vulpes (Red fox).